Consider the following 214-residue polypeptide: MGLRDWLRTVCCCCGCECLEERALPEKEPLVSDNNPYSSFGATLVRDDEKNLWSMPHDVSHTEADDDRTLYNLIVIRNQQAKDSEEWQKLNYDIHTLRQVRREVRNRWKCILEDLGFQKEADSLLSVTKLSTISDSKNTRKAREMLLKLAEETNIFPTSWELSERYLFVVDRLIALDAAEEFFKLARRTYPKKPGVPCLADGQKELHYLPFPSP.

A Cholesterol-binding sequence motif motif is present at residues 162 to 172 (LSERYLFVVDR). Serine 213 carries the post-translational modification Phosphoserine.

The protein belongs to the melanoregulin family. In terms of assembly, identified in a complex with RILP and DCTN1; interacts directly with RILP, but does not interact directly with DCTN1. Interacts with PRPH2. In terms of processing, palmitoylated. Palmitoylation is required to maintain the protein at the melanosome membrane. As to expression, expressed in photoreceptor cells (at protein level).

The protein resides in the apical cell membrane. The protein localises to the melanosome membrane. It is found in the lysosome membrane. It localises to the cytoplasmic vesicle membrane. Functionally, probably functions as a cargo-recognition protein that couples cytoplasmic vesicles to the transport machinery. Plays a role in hair pigmentation, a process that involves shedding of melanosome-containing vesicles from melanocytes, followed by phagocytosis of the melanosome-containing vesicles by keratinocytes. Functions on melanosomes as receptor for RILP and the complex formed by RILP and DCTN1, and thereby contributes to retrograde melanosome transport from the cell periphery to the center. Overexpression causes accumulation of late endosomes and/or lysosomes at the microtubule organising center (MTOC) at the center of the cell. Probably binds cholesterol and requires the presence of cholesterol in membranes to function in microtubule-mediated retrograde organelle transport. Binds phosphatidylinositol 3-phosphate, phosphatidylinositol 4-phosphate, phosphatidylinositol 5-phosphate and phosphatidylinositol 3,5-bisphosphate, but not phosphatidylinositol 3,4-bisphosphate or phosphatidylinositol 4,5-bisphosphate. Required for normal phagosome clearing and normal activation of lysosomal enzymes in lysosomes from retinal pigment epithelium cells. Required for normal degradation of the lipofuscin component N-retinylidene-N-retinylethanolamine (A2E) in the eye. May function in membrane fusion and regulate the biogenesis of disk membranes of photoreceptor rod cells. This is Melanoregulin (MREG) from Homo sapiens (Human).